Consider the following 327-residue polypeptide: Ribosomal RNA large subunit methyltransferase F (327 aa).

The interval 1 to 31 (MTHPVTPKNTTRPTPANKPAASTLHPRNPHQ) is disordered.

It belongs to the methyltransferase superfamily. METTL16/RlmF family.

It is found in the cytoplasm. The catalysed reaction is adenosine(1618) in 23S rRNA + S-adenosyl-L-methionine = N(6)-methyladenosine(1618) in 23S rRNA + S-adenosyl-L-homocysteine + H(+). In terms of biological role, specifically methylates the adenine in position 1618 of 23S rRNA. The protein is Ribosomal RNA large subunit methyltransferase F of Psychrobacter sp. (strain PRwf-1).